The chain runs to 401 residues: F-box protein At2g43440 (401 aa).

In terms of domain architecture, F-box spans 7–53 (NTNSIYIVPELLEDIFLRLPLKSILKFKTVSRQWRSILESKLFVERR).

The polypeptide is F-box protein At2g43440 (Arabidopsis thaliana (Mouse-ear cress)).